Here is a 494-residue protein sequence, read N- to C-terminus: Guanosine-5'-triphosphate,3'-diphosphate pyrophosphatase (494 aa).

It belongs to the GppA/Ppx family. GppA subfamily.

The catalysed reaction is guanosine 3'-diphosphate 5'-triphosphate + H2O = guanosine 3',5'-bis(diphosphate) + phosphate + H(+). It participates in purine metabolism; ppGpp biosynthesis; ppGpp from GTP: step 2/2. Catalyzes the conversion of pppGpp to ppGpp. Guanosine pentaphosphate (pppGpp) is a cytoplasmic signaling molecule which together with ppGpp controls the 'stringent response', an adaptive process that allows bacteria to respond to amino acid starvation, resulting in the coordinated regulation of numerous cellular activities. The sequence is that of Guanosine-5'-triphosphate,3'-diphosphate pyrophosphatase from Escherichia coli O6:H1 (strain CFT073 / ATCC 700928 / UPEC).